Reading from the N-terminus, the 189-residue chain is Casparian strip membrane protein 2 (189 aa).

Residues 1–21 are disordered; it reads MKVSTIESGEISKGASSPRKG. The Cytoplasmic portion of the chain corresponds to 1 to 25; sequence MKVSTIESGEISKGASSPRKGMKRG. The chain crosses the membrane as a helical span at residues 26-46; the sequence is LSIMDFILRIFAAMSTLGSAL. Topologically, residues 47 to 73 are extracellular; it reads SMGTAKQTMPFATRFVRFKVSFHDLPT. The helical transmembrane segment at 74–94 threads the bilayer; the sequence is FLFFVTANSIVCGYLALSLVL. The Cytoplasmic segment spans residues 95–108; it reads SFFHIVRTISVKSR. A helical membrane pass occupies residues 109–129; that stretch reads ILLVFLDTVMFGLLTSGASAA. Residues 130-163 are Extracellular-facing; that stretch reads AAIVYVAHYGNPSANWFPFCQQYNSFCGRISGSL. A helical membrane pass occupies residues 164 to 184; sequence VGSFIAVVIFMILILMSGISI. The Cytoplasmic portion of the chain corresponds to 185-189; the sequence is SKSKH.

The protein belongs to the Casparian strip membrane proteins (CASP) family. Homodimer and heterodimers.

The protein resides in the cell membrane. Functionally, regulates membrane-cell wall junctions and localized cell wall deposition. Required for establishment of the Casparian strip membrane domain (CSD) and the subsequent formation of Casparian strips, a cell wall modification of the root endodermis that determines an apoplastic barrier between the intraorganismal apoplasm and the extraorganismal apoplasm and prevents lateral diffusion. In Medicago truncatula (Barrel medic), this protein is Casparian strip membrane protein 2.